A 311-amino-acid polypeptide reads, in one-letter code: Transcriptional regulatory protein MoaR1 (311 aa).

Positions 15-117 (LNATTAGAVQ…SEPPGYRLLI (103 aa)) form a DNA-binding region, ompR/PhoB-type.

This sequence belongs to the AfsR/DnrI/RedD regulatory family.

Acts as a positive transcriptional regulator of the molybdopterin biosynthesis moa1 locus, promoting the expression of the moaA1B1C1D1 genes. In Mycobacterium bovis (strain BCG / Pasteur 1173P2), this protein is Transcriptional regulatory protein MoaR1 (moaR1).